The primary structure comprises 210 residues: Putative 4-hydroxy-4-methyl-2-oxoglutarate aldolase (210 aa).

Substrate-binding positions include 87–90 (GDFV) and Arg-109. Asp-110 contacts a divalent metal cation.

This sequence belongs to the class II aldolase/RraA-like family. Homotrimer. A divalent metal cation is required as a cofactor.

It catalyses the reaction 4-hydroxy-4-methyl-2-oxoglutarate = 2 pyruvate. The enzyme catalyses oxaloacetate + H(+) = pyruvate + CO2. In terms of biological role, catalyzes the aldol cleavage of 4-hydroxy-4-methyl-2-oxoglutarate (HMG) into 2 molecules of pyruvate. Also contains a secondary oxaloacetate (OAA) decarboxylase activity due to the common pyruvate enolate transition state formed following C-C bond cleavage in the retro-aldol and decarboxylation reactions. This is Putative 4-hydroxy-4-methyl-2-oxoglutarate aldolase from Halalkalibacterium halodurans (strain ATCC BAA-125 / DSM 18197 / FERM 7344 / JCM 9153 / C-125) (Bacillus halodurans).